The sequence spans 574 residues: Septation ring formation regulator EzrA (574 aa).

The Extracellular portion of the chain corresponds to 1-7; it reads MSSGIIL. Residues 8–26 form a helical membrane-spanning segment; the sequence is LLVAIVLLVIIAYVVGVVI. Over 27-574 the chain is Cytoplasmic; that stretch reads RKRNDTLIAN…YEKTQERIRF (548 aa). 3 coiled-coil regions span residues 104-141, 275-343, and 473-525; these read VRAK…EEKN, LVSL…SAKY, and DIEA…VQKS.

It belongs to the EzrA family.

The protein localises to the cell membrane. In terms of biological role, negative regulator of FtsZ ring formation; modulates the frequency and position of FtsZ ring formation. Inhibits FtsZ ring formation at polar sites. Interacts either with FtsZ or with one of its binding partners to promote depolymerization. This Streptococcus agalactiae serotype III (strain NEM316) protein is Septation ring formation regulator EzrA.